The chain runs to 131 residues: Profilin-10 (131 aa).

Cysteine 13 and cysteine 115 are joined by a disulfide. Residues 81-97 (AVIRGKKGAGGITIKKT) carry the Involved in PIP2 interaction motif. Residue threonine 111 is modified to Phosphothreonine.

Belongs to the profilin family. Occurs in many kinds of cells as a complex with monomeric actin in a 1:1 ratio. Phosphorylated by MAP kinases.

It localises to the cytoplasm. Its subcellular location is the cytoskeleton. In terms of biological role, binds to actin and affects the structure of the cytoskeleton. At high concentrations, profilin prevents the polymerization of actin, whereas it enhances it at low concentrations. The chain is Profilin-10 from Phleum pratense (Common timothy).